Consider the following 266-residue polypeptide: Phosphatidate cytidylyltransferase (266 aa).

The next 8 membrane-spanning stretches (helical) occupy residues 16 to 36 (VVLI…LFWA), 52 to 72 (LFQV…WVAA), 78 to 98 (PVEC…YQKA), 101 to 121 (SEAI…FGVY), 125 to 145 (GAVA…GAFF), 164 to 184 (LEGA…VGMG), 186 to 206 (LSGG…MAVF), and 237 to 257 (LDSM…LEIW).

Belongs to the CDS family.

It is found in the cell inner membrane. The catalysed reaction is a 1,2-diacyl-sn-glycero-3-phosphate + CTP + H(+) = a CDP-1,2-diacyl-sn-glycerol + diphosphate. It functions in the pathway phospholipid metabolism; CDP-diacylglycerol biosynthesis; CDP-diacylglycerol from sn-glycerol 3-phosphate: step 3/3. This Helicobacter pylori (strain J99 / ATCC 700824) (Campylobacter pylori J99) protein is Phosphatidate cytidylyltransferase (cdsA).